The sequence spans 123 residues: Large ribosomal subunit protein uL29x (123 aa).

It belongs to the universal ribosomal protein uL29 family.

This chain is Large ribosomal subunit protein uL29x (RPL35C), found in Arabidopsis thaliana (Mouse-ear cress).